The following is a 181-amino-acid chain: UPF0398 protein lin2003 (181 aa).

This sequence belongs to the UPF0398 family.

The sequence is that of UPF0398 protein lin2003 from Listeria innocua serovar 6a (strain ATCC BAA-680 / CLIP 11262).